The sequence spans 327 residues: Endochitinase CH5B (327 aa).

The first 26 residues, 1 to 26, serve as a signal peptide directing secretion; that stretch reads MKKNRMMIMICSVGVVWMLLVGGSYG. The region spanning 27–67 is the Chitin-binding type-1 domain; that stretch reads EQCGRQAGGALCPGGNCCSQFGWCGSTTDYCGKDCQSQCGG. 7 disulfide bridges follow: C29-C44, C38-C50, C43-C57, C61-C65, C96-C158, C169-C177, and C276-C308. E140 acts as the Proton donor in catalysis. Residues 317 to 327 constitute a propeptide, removed in mature form; it reads SLFLSDLVTSQ.

Belongs to the glycosyl hydrolase 19 family. Chitinase class I subfamily.

It is found in the vacuole. The enzyme catalyses Random endo-hydrolysis of N-acetyl-beta-D-glucosaminide (1-&gt;4)-beta-linkages in chitin and chitodextrins.. Functionally, defense against chitin-containing fungal pathogens. The chain is Endochitinase CH5B from Phaseolus vulgaris (Kidney bean).